A 333-amino-acid chain; its full sequence is Uroporphyrinogen decarboxylase (333 aa).

Substrate is bound by residues 22 to 26 (RQAGR), Asp-71, Tyr-145, Ser-200, and His-310.

Belongs to the uroporphyrinogen decarboxylase family. As to quaternary structure, homodimer.

Its subcellular location is the cytoplasm. It carries out the reaction uroporphyrinogen III + 4 H(+) = coproporphyrinogen III + 4 CO2. It functions in the pathway porphyrin-containing compound metabolism; protoporphyrin-IX biosynthesis; coproporphyrinogen-III from 5-aminolevulinate: step 4/4. In terms of biological role, catalyzes the decarboxylation of four acetate groups of uroporphyrinogen-III to yield coproporphyrinogen-III. This chain is Uroporphyrinogen decarboxylase, found in Thermoplasma acidophilum (strain ATCC 25905 / DSM 1728 / JCM 9062 / NBRC 15155 / AMRC-C165).